The following is a 312-amino-acid chain: DNA-directed RNA polymerase subunit alpha (312 aa).

The segment at 1 to 226 is alpha N-terminal domain (alpha-NTD); the sequence is MIEFEKPKIT…DHLNLFVDLS (226 aa). Positions 243-312 are alpha C-terminal domain (alpha-CTD); that stretch reads TERVLDKIIE…ELGLSLKKRK (70 aa).

This sequence belongs to the RNA polymerase alpha chain family. In terms of assembly, homodimer. The RNAP catalytic core consists of 2 alpha, 1 beta, 1 beta' and 1 omega subunit. When a sigma factor is associated with the core the holoenzyme is formed, which can initiate transcription.

The catalysed reaction is RNA(n) + a ribonucleoside 5'-triphosphate = RNA(n+1) + diphosphate. In terms of biological role, DNA-dependent RNA polymerase catalyzes the transcription of DNA into RNA using the four ribonucleoside triphosphates as substrates. The sequence is that of DNA-directed RNA polymerase subunit alpha from Lactococcus lactis subsp. cremoris (strain MG1363).